The primary structure comprises 547 residues: Glucose-6-phosphate isomerase 1 (547 aa).

Glutamate 353 serves as the catalytic Proton donor. Residues histidine 384 and lysine 512 contribute to the active site.

The protein belongs to the GPI family.

It is found in the cytoplasm. The catalysed reaction is alpha-D-glucose 6-phosphate = beta-D-fructose 6-phosphate. Its pathway is carbohydrate biosynthesis; gluconeogenesis. The protein operates within carbohydrate degradation; glycolysis; D-glyceraldehyde 3-phosphate and glycerone phosphate from D-glucose: step 2/4. Catalyzes the reversible isomerization of glucose-6-phosphate to fructose-6-phosphate. This chain is Glucose-6-phosphate isomerase 1, found in Chromobacterium violaceum (strain ATCC 12472 / DSM 30191 / JCM 1249 / CCUG 213 / NBRC 12614 / NCIMB 9131 / NCTC 9757 / MK).